We begin with the raw amino-acid sequence, 98 residues long: Large ribosomal subunit protein uL23 (98 aa).

Belongs to the universal ribosomal protein uL23 family. Part of the 50S ribosomal subunit. Contacts protein L29, and trigger factor when it is bound to the ribosome.

In terms of biological role, one of the early assembly proteins it binds 23S rRNA. One of the proteins that surrounds the polypeptide exit tunnel on the outside of the ribosome. Forms the main docking site for trigger factor binding to the ribosome. The protein is Large ribosomal subunit protein uL23 of Rickettsia bellii (strain OSU 85-389).